The following is a 664-amino-acid chain: E3 ubiquitin-protein ligase RNF139 (664 aa).

At Ala-2 the chain carries N-acetylalanine. Helical transmembrane passes span 51–71, 85–105, 125–145, 154–174, 178–198, 293–313, 323–343, 356–376, 390–410, 420–440, 469–489, and 495–512; these read IVLQ…VLIL, AFLL…HIDF, SLWM…VTLL, LIIL…PLHI, LVFT…AVKL, GMSA…LAFI, LGFV…LSGL, MCLL…PVLM, FPVL…SYVL, LFAA…SLTV, SIIV…TMMF, and IRAF…YLQA. An RING-type; atypical zinc finger spans residues 547–586; the sequence is CAICYHEFTTSARITPCNHYFHALCLRKWLYIQDTCPMCH. The segment covering 599–610 has biased composition (polar residues); sequence SNVSNNNGFTPP. The segment at 599–664 is disordered; it reads SNVSNNNGFT…AAEEFNDDTD (66 aa). Residues 616-628 show a composition bias toward basic and acidic residues; that stretch reads EAVREAAAESDRE. Acidic residues predominate over residues 629–639; it reads LNEDDSTDCDD. Position 634 is a phosphoserine (Ser-634). A phosphothreonine mark is found at Thr-635 and Thr-663.

Interacts with VHL. Interacts with MHC class I and HM13. Component of SCAP-SREBP complex composed of SREBF2, SCAP and RNF139; the complex hampers the interaction between SCAP and SEC24B, thereby reducing SREBF2 proteolytic processing. Interacts with SREBF2 (via C-terminal domain). Interacts with SCAP; the interaction inhibits the interaction of SCAP with SEC24B and hampering the ER to Golgi transport of the SCAP-SREBP complex. Interacts with SEC24B. Interacts with INSIG1 and INSIG2. Interacts with EIF3F and EIF3H; the interaction leads to protein translation inhibitions in a ubiquitination-dependent manner. Interacts with XBP1; the interaction induces ubiquitination and degradation of XBP1. Interacts with AUP1, AMFR and UBE2G2; interaction with AUP1 facilitates interaction of RNF139 with ubiquitin-conjugating enzyme UBE2G2 and ubiquitin ligase AMFR/gp78, leading to sterol-induced ubiquitination of HMGCR and its subsequent proteasomal degradation. Autoubiquitinated. Ubiquitination is induced by sterol and leads to ist degradation via the ubiquitin-proteasome pathway.

It localises to the endoplasmic reticulum membrane. It carries out the reaction S-ubiquitinyl-[E2 ubiquitin-conjugating enzyme]-L-cysteine + [acceptor protein]-L-lysine = [E2 ubiquitin-conjugating enzyme]-L-cysteine + N(6)-ubiquitinyl-[acceptor protein]-L-lysine.. It participates in protein modification; protein ubiquitination. In terms of biological role, E3-ubiquitin ligase; acts as a negative regulator of cell proliferation through mechanisms involving G2/M arrest and cell death. Required for MHC class I ubiquitination in cells expressing the cytomegalovirus protein US2 before dislocation from the endoplasmic reticulum (ER). Affects SREBP processing by hindering the SREBP-SCAP complex translocation from the ER to the Golgi, thereby reducing SREBF2 target gene expression. Involved in the sterol-accelerated degradation of HMGCR. This is achieved through binding to INSIG1 and/or INSIG2 at the ER membrane. In addition, interaction of RNF139 with AUP1 facilitates interaction of RNF139 with ubiquitin-conjugating enzyme UBE2G2 and ubiquitin ligase AMFR, leading to ubiquitination of HMGCR. The ubiquitinated HMGCR is then released from the ER by the complex into the cytosol for subsequent destruction. Required for INSIG1 ubiquitination. May be required for EIF3 complex ubiquitination. The sequence is that of E3 ubiquitin-protein ligase RNF139 (RNF139) from Pongo abelii (Sumatran orangutan).